We begin with the raw amino-acid sequence, 517 residues long: Ammonium transporter 3 (517 aa).

At 1–32 the chain is on the extracellular side; it reads MLNEPNALLRRDANSTIATVTELFPNEYSNAD. The helical transmembrane segment at 33 to 53 threads the bilayer; it reads IAYVLLSTVVVFTVTPGIALY. Topologically, residues 54–69 are cytoplasmic; the sequence is YAGMVRKNSALSILTQ. The chain crosses the membrane as a helical span at residues 70–90; that stretch reads SFLVTAVVFIQWYLFGYSLAC. Residues 91–118 are Extracellular-facing; sequence SSGSSFYGTLWQGGMNHLWLEPYIPGST. Residues 119 to 139 form a helical membrane-spanning segment; sequence IPAIVYFPFGGLFAVATAQLF. The Cytoplasmic portion of the chain corresponds to 140-148; sequence AGAMAERGR. A helical transmembrane segment spans residues 149 to 169; the sequence is LIPSLVISFLYITLVYCPQAY. Residues 170 to 180 are Extracellular-facing; the sequence is WTWAPNGWLYT. The helical transmembrane segment at 181 to 201 threads the bilayer; sequence LGALDFAGGGPVHISSGFAAL. Residues 202 to 272 are Cytoplasmic-facing; sequence AYSLCLGRRI…AHNPPHDAGM (71 aa). The helical transmembrane segment at 273–293 threads the bilayer; the sequence is VYIGVVLIWFAWLCFNSGTLL. The Extracellular segment spans residues 294–299; sequence TVNIRT. A helical membrane pass occupies residues 300–320; it reads AYIMTNTLISSSFGALTWAII. Topologically, residues 321–327 are cytoplasmic; sequence DYIRYRK. Residues 328-348 form a helical membrane-spanning segment; that stretch reads FSTIGICEGAIAGLVGITPAC. Glycine 349 is a topological domain (extracellular). Residues 350–370 traverse the membrane as a helical segment; sequence FVFPWGAAAGGIVPALVCNFL. The Cytoplasmic portion of the chain corresponds to 371 to 384; the sequence is HDLNEWIGVDETLR. Residues 385–405 traverse the membrane as a helical segment; that stretch reads VFNLHGIGGIVGSIVLGVVAH. Residues 406–432 are Extracellular-facing; that stretch reads PDVAASDGATVIDGGWAVHHWKQMGYQ. Residues 433–453 traverse the membrane as a helical segment; it reads FAGFTSVAAWSFVITAIICLL. The Cytoplasmic portion of the chain corresponds to 454–517; it reads VDLVPGLHIR…NIKQEKQDEF (64 aa).

Belongs to the ammonia transporter channel (TC 1.A.11.2) family.

It is found in the membrane. In terms of biological role, transporter for ammonium to use as a nitrogen source. In Schizosaccharomyces pombe (strain 972 / ATCC 24843) (Fission yeast), this protein is Ammonium transporter 3 (amt3).